Consider the following 253-residue polypeptide: MGTILDKIVDQKKKEVAALYETYTPVKEKRKTRSLVKALEQFTVIAEVKRASPSKGDINLHVDVRKQVKAYEECGAGAVSVLTDGQFFKGSFYDLQTAREESSIPLLCKDFIIDKIQIDRAYEAGADIILLIVAALTKEKLKELYSYVLEKGLEAIVEVHDEQELEIAIQFNPHVIGINNRNLKTFEVDLSQTEKLGKRLNEEKLLWISESGVHSKEDMIRVKRAGAKGVLVGEALMTSSSIHTFFEDCKVNI.

It belongs to the TrpC family.

It catalyses the reaction 1-(2-carboxyphenylamino)-1-deoxy-D-ribulose 5-phosphate + H(+) = (1S,2R)-1-C-(indol-3-yl)glycerol 3-phosphate + CO2 + H2O. It functions in the pathway amino-acid biosynthesis; L-tryptophan biosynthesis; L-tryptophan from chorismate: step 4/5. This chain is Indole-3-glycerol phosphate synthase, found in Bacillus cereus (strain AH187).